Reading from the N-terminus, the 440-residue chain is Golgi reassembly-stacking protein 1 (440 aa).

A lipid anchor (N-myristoyl glycine) is attached at Gly2. 2 PDZ GRASP-type domains span residues 15–105 (EGFH…FCSF) and 111–199 (QVWH…YGYL). Residues 15 to 215 (EGFHLHGVQE…PPSYHKKPPG (201 aa)) form a GRASP region. Zn(2+) contacts are provided by His18, His20, and Cys103. Residues 190–202 (LGCGIGYGYLHRI) form an essential for interaction with GOLGA2/GM130 region. Disordered stretches follow at residues 205–248 (QPPS…ETGS), 261–301 (PGSS…PVQR), and 327–440 (LPSS…STTE). A compositionally biased stretch (pro residues) spans 214–239 (PGTPPPSALPLGAPPPDALPPGPTPE). At Thr216 the chain carries Phosphothreonine. A compositionally biased stretch (low complexity) spans 327-336 (LPSSTELTTT). Over residues 337–351 (AVSTSGPEDICSSSS) the composition is skewed to polar residues. Residues Ser362, Ser364, and Ser373 each carry the phosphoserine modification.

Belongs to the GORASP family. In terms of assembly, homodimer. Forms higher-order oligomers under interphase but not mitotic conditions. Dimers of the protein on one membrane might be able to interact with dimers on another and so stack cisternae. Interacts with the C-terminus of GOLGA2/GM130 under both mitotic and non-mitotic conditions. The interaction is critical for the correct targeting of both proteins to the cis-Golgi. Interacts with TMED2 and TMED3. In terms of processing, phosphorylated by CDC2/B1 and PLK kinases during mitosis. Phosphorylation cycle correlates with the cisternal stacking cycle. Phosphorylation of the homodimer prevents the association of dimers into higher-order oligomers, leading to cisternal unstacking. Target for caspase-3 cleavage during apoptosis. The cleavage contributes to Golgi fragmentation and occurs very early in the execution phase of apoptosis. Post-translationally, myristoylated.

It localises to the golgi apparatus. Its subcellular location is the cis-Golgi network membrane. The protein localises to the endoplasmic reticulum-Golgi intermediate compartment membrane. Its function is as follows. Key structural protein of the Golgi apparatus. The membrane cisternae of the Golgi apparatus adhere to each other to form stacks, which are aligned side by side to form the Golgi ribbon. Acting in concert with GORASP2/GRASP55, is required for the formation and maintenance of the Golgi ribbon, and may be dispensable for the formation of stacks. However, other studies suggest that GORASP1 plays an important role in assembly and membrane stacking of the cisternae, and in the reassembly of Golgi stacks after breakdown during mitosis. Caspase-mediated cleavage of GORASP1 is required for fragmentation of the Golgi during apoptosis. Also mediates, via its interaction with GOLGA2/GM130, the docking of transport vesicles with the Golgi membranes. Mediates ER stress-induced unconventional (ER/Golgi-independent) trafficking of core-glycosylated CFTR to cell membrane. In Homo sapiens (Human), this protein is Golgi reassembly-stacking protein 1 (GORASP1).